The following is a 226-amino-acid chain: Ras-related protein RGP1 (226 aa).

Residue 25–32 coordinates GTP; it reads GDSAVGKS. An Effector region motif is present at residues 47–55; sequence SKATIGVEF. Residues 73–77 and 131–134 each bind GTP; these read DTAGQ and NKSD. S-geranylgeranyl cysteine attachment occurs at residues Cys-223 and Cys-224.

The protein belongs to the small GTPase superfamily. Rab family.

The protein resides in the cell membrane. In terms of biological role, may play an important role in plant growth and development. The polypeptide is Ras-related protein RGP1 (RGP1) (Oryza sativa subsp. japonica (Rice)).